The chain runs to 332 residues: tRNA dimethylallyltransferase (332 aa).

14–21 contacts ATP; sequence GPTASGKT. Residue 16–21 participates in substrate binding; it reads TASGKT. Residues 39–42 are interaction with substrate tRNA; sequence DSMQ. The segment at 313 to 332 is disordered; the sequence is KRSSKHDCKPQHPRSSTREL. Positions 317 to 332 are enriched in basic and acidic residues; sequence KHDCKPQHPRSSTREL.

Belongs to the IPP transferase family. As to quaternary structure, monomer. Mg(2+) is required as a cofactor.

It catalyses the reaction adenosine(37) in tRNA + dimethylallyl diphosphate = N(6)-dimethylallyladenosine(37) in tRNA + diphosphate. Its function is as follows. Catalyzes the transfer of a dimethylallyl group onto the adenine at position 37 in tRNAs that read codons beginning with uridine, leading to the formation of N6-(dimethylallyl)adenosine (i(6)A). The chain is tRNA dimethylallyltransferase from Staphylococcus haemolyticus (strain JCSC1435).